Reading from the N-terminus, the 162-residue chain is NADH-ubiquinone oxidoreductase chain 6 (162 aa).

The next 4 membrane-spanning stretches (helical) occupy residues 1-21 (MIFY…FYSL), 46-66 (FSFI…VVFV), 84-104 (EILV…DPLI), and 130-150 (GGYL…ALVL).

This sequence belongs to the complex I subunit 6 family.

It localises to the mitochondrion membrane. It carries out the reaction a ubiquinone + NADH + 5 H(+)(in) = a ubiquinol + NAD(+) + 4 H(+)(out). In terms of biological role, core subunit of the mitochondrial membrane respiratory chain NADH dehydrogenase (Complex I) that is believed to belong to the minimal assembly required for catalysis. Complex I functions in the transfer of electrons from NADH to the respiratory chain. The immediate electron acceptor for the enzyme is believed to be ubiquinone. In Patiria pectinifera (Starfish), this protein is NADH-ubiquinone oxidoreductase chain 6 (ND6).